We begin with the raw amino-acid sequence, 324 residues long: Nucleotide-binding protein GbCGDNIH1_0395 (324 aa).

Residue 14-21 (GLSGAGKS) participates in ATP binding. Position 59 to 62 (59 to 62 (DARS)) interacts with GTP. The tract at residues 286-324 (ISDDAPQAGAARVSTDDRNGRPEEHGSAQAPDELSRTTS) is disordered. The span at 299-311 (STDDRNGRPEEHG) shows a compositional bias: basic and acidic residues.

It belongs to the RapZ-like family.

Its function is as follows. Displays ATPase and GTPase activities. The protein is Nucleotide-binding protein GbCGDNIH1_0395 of Granulibacter bethesdensis (strain ATCC BAA-1260 / CGDNIH1).